The following is a 74-amino-acid chain: Large ribosomal subunit protein bL31 (74 aa).

Zn(2+) contacts are provided by C16, C18, C38, and C41.

The protein belongs to the bacterial ribosomal protein bL31 family. Type A subfamily. Part of the 50S ribosomal subunit. Zn(2+) is required as a cofactor.

In terms of biological role, binds the 23S rRNA. In Mycolicibacterium vanbaalenii (strain DSM 7251 / JCM 13017 / BCRC 16820 / KCTC 9966 / NRRL B-24157 / PYR-1) (Mycobacterium vanbaalenii), this protein is Large ribosomal subunit protein bL31.